A 149-amino-acid polypeptide reads, in one-letter code: Arginine regulator (149 aa).

Belongs to the ArgR family.

It is found in the cytoplasm. It participates in amino-acid degradation; L-arginine degradation via ADI pathway. Functionally, regulates the transcription of the arc operon, involved in arginine catabolism. The sequence is that of Arginine regulator (argR1) from Bacillus thuringiensis subsp. konkukian (strain 97-27).